A 102-amino-acid chain; its full sequence is Small ribosomal subunit protein uS10 (102 aa).

It belongs to the universal ribosomal protein uS10 family. As to quaternary structure, part of the 30S ribosomal subunit.

In terms of biological role, involved in the binding of tRNA to the ribosomes. The chain is Small ribosomal subunit protein uS10 from Methylorubrum populi (strain ATCC BAA-705 / NCIMB 13946 / BJ001) (Methylobacterium populi).